A 179-amino-acid polypeptide reads, in one-letter code: Molybdopterin synthase catalytic subunit (179 aa).

The span at 1-10 (MTTSEDQTTP) shows a compositional bias: polar residues. Positions 1–21 (MTTSEDQTTPAHLDPKTYPRH) are disordered. Residues 127-128 (HR), K143, and 150-152 (KRE) contribute to the substrate site.

This sequence belongs to the MoaE family. MOCS2B subfamily. In terms of assembly, heterotetramer; composed of 2 small (MOCS2A) and 2 large (MOCS2B) subunits.

It localises to the cytoplasm. It catalyses the reaction 2 [molybdopterin-synthase sulfur-carrier protein]-C-terminal-Gly-aminoethanethioate + cyclic pyranopterin phosphate + H2O = molybdopterin + 2 [molybdopterin-synthase sulfur-carrier protein]-C-terminal Gly-Gly + 2 H(+). Its pathway is cofactor biosynthesis; molybdopterin biosynthesis. Functionally, catalytic subunit of the molybdopterin synthase complex, a complex that catalyzes the conversion of precursor Z into molybdopterin. Acts by mediating the incorporation of 2 sulfur atoms from thiocarboxylated MOCS2A into precursor Z to generate a dithiolene group. This chain is Molybdopterin synthase catalytic subunit, found in Aspergillus oryzae (strain ATCC 42149 / RIB 40) (Yellow koji mold).